The chain runs to 205 residues: Holliday junction branch migration complex subunit RuvA (205 aa).

The tract at residues 1-64 is domain I; sequence MIGRIRGLLV…EDAQLLYGFI (64 aa). Residues 65-143 form a domain II region; the sequence is SKQERALFRL…SLMEASVGSE (79 aa). The tract at residues 144 to 156 is flexible linker; it reads REFMLQSNYTAPV. A domain III region spans residues 157 to 205; it reads VANTAEEDAIAALLSLGYKPAQASKAVSAVYVDGIDSESLIKSALKSML.

The protein belongs to the RuvA family. Homotetramer. Forms an RuvA(8)-RuvB(12)-Holliday junction (HJ) complex. HJ DNA is sandwiched between 2 RuvA tetramers; dsDNA enters through RuvA and exits via RuvB. An RuvB hexamer assembles on each DNA strand where it exits the tetramer. Each RuvB hexamer is contacted by two RuvA subunits (via domain III) on 2 adjacent RuvB subunits; this complex drives branch migration. In the full resolvosome a probable DNA-RuvA(4)-RuvB(12)-RuvC(2) complex forms which resolves the HJ.

The protein resides in the cytoplasm. The RuvA-RuvB-RuvC complex processes Holliday junction (HJ) DNA during genetic recombination and DNA repair, while the RuvA-RuvB complex plays an important role in the rescue of blocked DNA replication forks via replication fork reversal (RFR). RuvA specifically binds to HJ cruciform DNA, conferring on it an open structure. The RuvB hexamer acts as an ATP-dependent pump, pulling dsDNA into and through the RuvAB complex. HJ branch migration allows RuvC to scan DNA until it finds its consensus sequence, where it cleaves and resolves the cruciform DNA. The chain is Holliday junction branch migration complex subunit RuvA from Shewanella piezotolerans (strain WP3 / JCM 13877).